We begin with the raw amino-acid sequence, 274 residues long: Methionine aminopeptidase B (274 aa).

Residue His102 coordinates substrate. A divalent metal cation contacts are provided by Asp120, Asp131, and His194. His201 is a substrate binding site. Glu227 and Glu258 together coordinate a divalent metal cation.

It belongs to the peptidase M24A family. Methionine aminopeptidase type 1 subfamily. Monomer. The cofactor is Co(2+). Zn(2+) is required as a cofactor. It depends on Mn(2+) as a cofactor. Fe(2+) serves as cofactor.

The catalysed reaction is Release of N-terminal amino acids, preferentially methionine, from peptides and arylamides.. In terms of biological role, removes the N-terminal methionine from nascent proteins. The N-terminal methionine is often cleaved when the second residue in the primary sequence is small and uncharged (Met-Ala-, Cys, Gly, Pro, Ser, Thr, or Val). Requires deformylation of the N(alpha)-formylated initiator methionine before it can be hydrolyzed. In Synechocystis sp. (strain ATCC 27184 / PCC 6803 / Kazusa), this protein is Methionine aminopeptidase B.